A 216-amino-acid chain; its full sequence is Ras-related protein Rab-2B (216 aa).

Residues G16, V17, G18, K19, S20, C21, and T38 each coordinate GTP. S20 is a binding site for Mg(2+). The Switch 1 signature appears at L37–E42. Residues T38 and D61 each coordinate Mg(2+). The Switch 2 signature appears at A63–T72. GTP contacts are provided by G64, N119, K120, D122, A150, and K151. Residues P189–S207 show a composition bias toward polar residues. Residues P189–C216 form a disordered region. 2 S-geranylgeranyl cysteine lipidation sites follow: C215 and C216.

Belongs to the small GTPase superfamily. Rab family. In terms of assembly, interacts (in GTP-bound form) with GARIN4 (via N-terminus). Interacts (in GTP-bound form) with GARIN5A. Interacts (in GTP-bound form) with GARIN1B. Interacts with VPS39 and VPS41. It depends on Mg(2+) as a cofactor.

It localises to the cell membrane. It is found in the endoplasmic reticulum membrane. The protein localises to the golgi apparatus membrane. Its subcellular location is the cytoplasmic vesicle. The protein resides in the secretory vesicle. It localises to the acrosome. It is found in the autophagosome membrane. The catalysed reaction is GTP + H2O = GDP + phosphate + H(+). With respect to regulation, regulated by guanine nucleotide exchange factors (GEFs) which promote the exchange of bound GDP for free GTP, GTPase activating proteins (GAPs) which increase the GTP hydrolysis activity, and GDP dissociation inhibitors (GDIs) which inhibit the dissociation of the nucleotide from the GTPase. Functionally, the small GTPases Rab are key regulators of intracellular membrane trafficking, from the formation of transport vesicles to their fusion with membranes. Rabs cycle between active GTP-bound and inactive GDP-bound states. In their active state, drive transport of vesicular carriers from donor organelles to acceptor organelles to regulate the membrane traffic that maintains organelle identity and morphology. Regulates the compacted morphology of the Golgi. Promotes cytosolic DNA-induced innate immune responses. Regulates IFN responses against DNA viruses by regulating the CGAS-STING signaling axis. Together with RAB2A redundantly required for efficient autophagic flux. The polypeptide is Ras-related protein Rab-2B (Rab2b) (Mus musculus (Mouse)).